We begin with the raw amino-acid sequence, 1191 residues long: uncharacterized protein (1191 aa).

WD repeat units lie at residues Gly558–Thr588, Gly599–Asp629, Gly640–His670, Gly682–Asp712, Leu723–Thr753, Gly764–Ser794, Gly805–Asp835, Gln995–Asn1025, Ala1036–Ser1066, Ser1077–Asp1107, and Ser1118–Pro1148.

This is an uncharacterized protein from Synechocystis sp. (strain ATCC 27184 / PCC 6803 / Kazusa).